A 124-amino-acid polypeptide reads, in one-letter code: Large ribosomal subunit protein bL20 (124 aa).

It belongs to the bacterial ribosomal protein bL20 family.

Its function is as follows. Binds directly to 23S ribosomal RNA and is necessary for the in vitro assembly process of the 50S ribosomal subunit. It is not involved in the protein synthesizing functions of that subunit. In Ehrlichia chaffeensis (strain ATCC CRL-10679 / Arkansas), this protein is Large ribosomal subunit protein bL20.